The following is a 312-amino-acid chain: tRNA-cytidine(32) 2-sulfurtransferase (312 aa).

The PP-loop motif signature appears at 39-44; it reads SGGKDS. [4Fe-4S] cluster-binding residues include Cys-114, Cys-117, and Cys-205.

It belongs to the TtcA family. As to quaternary structure, homodimer. Mg(2+) serves as cofactor. The cofactor is [4Fe-4S] cluster.

Its subcellular location is the cytoplasm. The enzyme catalyses cytidine(32) in tRNA + S-sulfanyl-L-cysteinyl-[cysteine desulfurase] + AH2 + ATP = 2-thiocytidine(32) in tRNA + L-cysteinyl-[cysteine desulfurase] + A + AMP + diphosphate + H(+). The protein operates within tRNA modification. In terms of biological role, catalyzes the ATP-dependent 2-thiolation of cytidine in position 32 of tRNA, to form 2-thiocytidine (s(2)C32). The sulfur atoms are provided by the cysteine/cysteine desulfurase (IscS) system. This Cupriavidus pinatubonensis (strain JMP 134 / LMG 1197) (Cupriavidus necator (strain JMP 134)) protein is tRNA-cytidine(32) 2-sulfurtransferase.